The chain runs to 93 residues: DNA-directed RNA polymerase subunit omega (93 aa).

Belongs to the RNA polymerase subunit omega family. As to quaternary structure, the RNAP catalytic core consists of 2 alpha, 1 beta, 1 beta' and 1 omega subunit. When a sigma factor is associated with the core the holoenzyme is formed, which can initiate transcription.

It carries out the reaction RNA(n) + a ribonucleoside 5'-triphosphate = RNA(n+1) + diphosphate. Functionally, promotes RNA polymerase assembly. Latches the N- and C-terminal regions of the beta' subunit thereby facilitating its interaction with the beta and alpha subunits. The protein is DNA-directed RNA polymerase subunit omega of Shewanella loihica (strain ATCC BAA-1088 / PV-4).